We begin with the raw amino-acid sequence, 426 residues long: Tyrosine--tRNA ligase (426 aa).

Residue tyrosine 37 participates in L-tyrosine binding. The 'HIGH' region signature appears at 42 to 51 (PTADSLHLGH). The L-tyrosine site is built by tyrosine 175 and glutamine 179. The 'KMSKS' region motif lies at 235 to 239 (KFGKT). An ATP-binding site is contributed by lysine 238. Residues 357-415 (TDLMQALVESELQPSRGQARKAIAANGVTVNGIKQPDPDYVLNENDRYFSNYTLLRRGK) form the S4 RNA-binding domain.

The protein belongs to the class-I aminoacyl-tRNA synthetase family. TyrS type 1 subfamily. Homodimer.

It is found in the cytoplasm. It catalyses the reaction tRNA(Tyr) + L-tyrosine + ATP = L-tyrosyl-tRNA(Tyr) + AMP + diphosphate + H(+). In terms of biological role, catalyzes the attachment of tyrosine to tRNA(Tyr) in a two-step reaction: tyrosine is first activated by ATP to form Tyr-AMP and then transferred to the acceptor end of tRNA(Tyr). The chain is Tyrosine--tRNA ligase from Klebsiella pneumoniae (strain 342).